Here is a 388-residue protein sequence, read N- to C-terminus: ATP phosphoribosyltransferase regulatory subunit (388 aa).

It belongs to the class-II aminoacyl-tRNA synthetase family. HisZ subfamily. In terms of assembly, heteromultimer composed of HisG and HisZ subunits.

The protein localises to the cytoplasm. It participates in amino-acid biosynthesis; L-histidine biosynthesis; L-histidine from 5-phospho-alpha-D-ribose 1-diphosphate: step 1/9. Required for the first step of histidine biosynthesis. May allow the feedback regulation of ATP phosphoribosyltransferase activity by histidine. This chain is ATP phosphoribosyltransferase regulatory subunit, found in Acinetobacter baylyi (strain ATCC 33305 / BD413 / ADP1).